The following is a 527-amino-acid chain: Mitochondrial substrate carrier family protein V (527 aa).

The segment covering 1–14 (MNSSDFKKSFKEST) has biased composition (basic and acidic residues). The interval 1–29 (MNSSDFKKSFKESTENNSNTYRPSKTLNT) is disordered. The Mitochondrial intermembrane segment spans residues 1–132 (MNSSDFKKSF…VSKKSISKEN (132 aa)). Residues 15–29 (ENNSNTYRPSKTLNT) show a composition bias toward polar residues. Solcar repeat units follow at residues 130-220 (KENV…CKKH), 253-345 (MTVP…FKII), and 430-519 (VNMI…CKDL). The chain crosses the membrane as a helical span at residues 133–153 (VNYLVSGSIAGAISRSATAGF). Over 154-187 (ERLTIIQQVQGMSQNLSQGYVGCIAAMKEMVKRE) the chain is Mitochondrial matrix. A helical transmembrane segment spans residues 188-208 (GFKSIWKGNGANIVKVSPNSG). The Mitochondrial intermembrane segment spans residues 209-258 (IRFLTYEFCKKHFLDNSSNHPSSSSIENGIDGNGVGCGSGSEMKMTVPQT). The chain crosses the membrane as a helical span at residues 259–279 (MFSGAMAGLTSTFFTYPLDVV). At 280 to 324 (RIRLSLQGSCSNDYAAHRYNGITHSFFKIHKDEGVKGLYKGLGTS) the chain is on the mitochondrial matrix side. The helical transmembrane segment at 325-345 (IASIVPWVSISFATYEGFKII) threads the bilayer. Over 346–435 (CKKMILNYQI…LKKGVNMICD (90 aa)) the chain is Mitochondrial intermembrane. Residues 436-456 (FVCGALSGAVTMTVCYPLDVL) form a helical membrane-spanning segment. Residues 457-487 (RRRMMIQGIGGNKVLYKNGWDATKKILSNEG) lie on the Mitochondrial matrix side of the membrane. The chain crosses the membrane as a helical span at residues 488–508 (LVAFYHGIIPAYFKVVPTVAI). Residues 509–527 (SFAVYEICKDLGSNKYQQK) lie on the Mitochondrial intermembrane side of the membrane.

This sequence belongs to the mitochondrial carrier (TC 2.A.29) family.

The protein localises to the mitochondrion inner membrane. In terms of biological role, mitochondrial solute carriers shuttle metabolites, nucleotides, and cofactors through the mitochondrial inner membrane. The chain is Mitochondrial substrate carrier family protein V (mcfV) from Dictyostelium discoideum (Social amoeba).